The chain runs to 148 residues: Large ribosomal subunit protein bL9 (148 aa).

Belongs to the bacterial ribosomal protein bL9 family.

In terms of biological role, binds to the 23S rRNA. The polypeptide is Large ribosomal subunit protein bL9 (Streptomyces avermitilis (strain ATCC 31267 / DSM 46492 / JCM 5070 / NBRC 14893 / NCIMB 12804 / NRRL 8165 / MA-4680)).